Reading from the N-terminus, the 148-residue chain is Cytochrome c oxidase subunit 6, mitochondrial (148 aa).

A mitochondrion-targeting transit peptide spans 1 to 40 (MASFFRTAVRGPSAGLFRAVARPQPIAARVSLFSTSSRFR).

Belongs to the cytochrome c oxidase subunit 5A family. As to quaternary structure, component of the cytochrome c oxidase (complex IV, CIV), a multisubunit enzyme composed of 11 subunits. The complex is composed of a catalytic core of 3 subunits Cox1, Cox2 and Cox3, encoded in the mitochondrial DNA, and 8 supernumerary subunits Cox4, Cox5a/Cox5, Cox6, Cox7, Cox8, Cox7a/Cox9, Cox6b/Cox12 and Cox6a/Cox13, which are encoded in the nuclear genome. The complex exists as a monomer or a dimer and forms respiratory supercomplexes (SCs) in the inner mitochondrial membrane with NADH-ubiquinone oxidoreductase (complex I, CI) and ubiquinol-cytochrome c oxidoreductase (cytochrome b-c1 complex, complex III, CIII), resulting in various different assemblies (supercomplexes I(1)IV(1), I(1)III(3)IV(2), III(2)IV(1) and III(2)IV(2) as well as larger supercomplexes of compositions like I(1)III(2)IV(5-6)).

It is found in the mitochondrion inner membrane. It participates in energy metabolism; oxidative phosphorylation. Functionally, component of the cytochrome c oxidase, the last enzyme in the mitochondrial electron transport chain which drives oxidative phosphorylation. The respiratory chain contains 3 multisubunit complexes succinate dehydrogenase (complex II, CII), ubiquinol-cytochrome c oxidoreductase (cytochrome b-c1 complex, complex III, CIII) and cytochrome c oxidase (complex IV, CIV), that cooperate to transfer electrons derived from NADH and succinate to molecular oxygen, creating an electrochemical gradient over the inner membrane that drives transmembrane transport and the ATP synthase. Cytochrome c oxidase is the component of the respiratory chain that catalyzes the reduction of oxygen to water. Electrons originating from reduced cytochrome c in the intermembrane space (IMS) are transferred via the dinuclear copper A center (CU(A)) of Cox2 and heme A of Cox1 to the active site in Cox1, a binuclear center (BNC) formed by heme A3 and copper B (CU(B)). The BNC reduces molecular oxygen to 2 water molecules using 4 electrons from cytochrome c in the IMS and 4 protons from the mitochondrial matrix. This chain is Cytochrome c oxidase subunit 6, mitochondrial (cox-6), found in Neurospora crassa (strain ATCC 24698 / 74-OR23-1A / CBS 708.71 / DSM 1257 / FGSC 987).